The sequence spans 640 residues: 1-deoxy-D-xylulose-5-phosphate synthase (640 aa).

Residues histidine 75 and 117-119 (GHA) each bind thiamine diphosphate. Aspartate 146 serves as a coordination point for Mg(2+). Thiamine diphosphate is bound by residues 147 to 148 (AA), asparagine 175, and glutamate 370. Residue asparagine 175 coordinates Mg(2+).

This sequence belongs to the transketolase family. DXPS subfamily. As to quaternary structure, homodimer. Mg(2+) is required as a cofactor. Requires thiamine diphosphate as cofactor.

It catalyses the reaction D-glyceraldehyde 3-phosphate + pyruvate + H(+) = 1-deoxy-D-xylulose 5-phosphate + CO2. The protein operates within metabolic intermediate biosynthesis; 1-deoxy-D-xylulose 5-phosphate biosynthesis; 1-deoxy-D-xylulose 5-phosphate from D-glyceraldehyde 3-phosphate and pyruvate: step 1/1. Its function is as follows. Catalyzes the acyloin condensation reaction between C atoms 2 and 3 of pyruvate and glyceraldehyde 3-phosphate to yield 1-deoxy-D-xylulose-5-phosphate (DXP). This chain is 1-deoxy-D-xylulose-5-phosphate synthase, found in Chlamydia trachomatis serovar D (strain ATCC VR-885 / DSM 19411 / UW-3/Cx).